The following is a 180-amino-acid chain: dCTP deaminase, dUMP-forming (180 aa).

DCTP is bound by residues 100–105 (RSSLGR), Asp117, 125–127 (TLE), Gln146, Tyr160, and Gln167. Glu127 serves as the catalytic Proton donor/acceptor.

This sequence belongs to the dCTP deaminase family. As to quaternary structure, homotrimer.

The catalysed reaction is dCTP + 2 H2O = dUMP + NH4(+) + diphosphate. It participates in pyrimidine metabolism; dUMP biosynthesis; dUMP from dCTP: step 1/1. In terms of biological role, bifunctional enzyme that catalyzes both the deamination of dCTP to dUTP and the hydrolysis of dUTP to dUMP without releasing the toxic dUTP intermediate. This Sulfurihydrogenibium sp. (strain YO3AOP1) protein is dCTP deaminase, dUMP-forming.